Reading from the N-terminus, the 132-residue chain is MAPAKEIWAVGRRKTSVARAKIKEGSGKITVNHKDIKDYLQNRKAIIEEAVRPLSLLNVLDKYDLNLNVSGGGITGQVGAIRHALARAICRIKPEFRPAVKKEGFLTRDPRMVERKKYGLHKARRGTQFSKR.

It belongs to the universal ribosomal protein uS9 family.

The chain is Small ribosomal subunit protein uS9 from Leptospira borgpetersenii serovar Hardjo-bovis (strain JB197).